A 159-amino-acid polypeptide reads, in one-letter code: NADH-quinone oxidoreductase subunit B (159 aa).

[4Fe-4S] cluster is bound by residues cysteine 32, cysteine 33, cysteine 97, and cysteine 126.

Belongs to the complex I 20 kDa subunit family. As to quaternary structure, NDH-1 is composed of 14 different subunits. Subunits NuoB, C, D, E, F, and G constitute the peripheral sector of the complex. The cofactor is [4Fe-4S] cluster.

It localises to the cell inner membrane. It carries out the reaction a quinone + NADH + 5 H(+)(in) = a quinol + NAD(+) + 4 H(+)(out). Its function is as follows. NDH-1 shuttles electrons from NADH, via FMN and iron-sulfur (Fe-S) centers, to quinones in the respiratory chain. The immediate electron acceptor for the enzyme in this species is believed to be ubiquinone. Couples the redox reaction to proton translocation (for every two electrons transferred, four hydrogen ions are translocated across the cytoplasmic membrane), and thus conserves the redox energy in a proton gradient. The chain is NADH-quinone oxidoreductase subunit B from Helicobacter pylori (strain HPAG1).